The chain runs to 724 residues: MVMQEEKKRQQPVTRRVRSFSESFKNLFRPPRSRDSSPINVTRIPYRSSSTSPKRSSEPPRRSTVSAQILDPKNSPIRQRSYTLKCCTPGLSHPFRQTGSGASNSPTRHRSISGEEQEIVNSLPEYKRSASHTFHGIRRPRSRSSSVSSCDSSNGTTSSSDSQWAMDSLLDDSDNDLTPYRGSNKDILKSKDRAPYNYIDDYNKKALRRATSYPNPLPSKQFYNERLYTRRSHPDEESLESLPRFAGADVQCIIEQNGFKVYEDGSHEHNIKLSGVIAKLEKGNSLPAHRQGSLSRPRLGITLSGLFKHHKNECDIENALSLLPNVEKSQTNHEKRTGQSPNDSNRSSPTQGREDYLKIVNPDASLGSDELKLINSLSSRIHKSLQNYLQEKNLKPAECIGEQAPTFQDNYGHPVGLVGAGAYGEVKLCARLRNEKDSPPFETYHDSKYIYYAVKELKPKPDSDLEKFCTKITSEFIIGHSLSHYHKNGKKPAPNILNVFDILEDSSSFIEVMEFCPAGDLYGMLVGKSKLKGRLHPLEADCFMKQLLHGVKFMHDHGIAHCDLKPENILFYPHGLLKICDFGTSSVFQTAWERRVHAQKGIIGSEPYVAPEEFVDGEYYDPRLIDCWSCGVVYITMILGHYLWKVASREKDMSYDEFYKEMQRKNQFRVFEELKHVNSELATNRKIALYRIFQWEPRKRISVGKLLDMQWMKSTNCCLIYDST.

Disordered regions lie at residues 1 to 81 (MVMQ…RQRS) and 93 to 188 (HPFR…KDIL). Phosphoserine is present on Ser19. Over residues 45-54 (PYRSSSTSPK) the composition is skewed to low complexity. The segment covering 95 to 106 (FRQTGSGASNSP) has biased composition (polar residues). The segment covering 143-162 (RSSSVSSCDSSNGTTSSSDS) has biased composition (low complexity). Phosphoserine is present on residues Ser232, Ser238, and Ser241. The interval 329 to 355 (SQTNHEKRTGQSPNDSNRSSPTQGRED) is disordered. Polar residues predominate over residues 338–351 (GQSPNDSNRSSPTQ). In terms of domain architecture, Protein kinase spans 412–712 (GHPVGLVGAG…VGKLLDMQWM (301 aa)). Residues 418–426 (VGAGAYGEV) and Lys455 contribute to the ATP site. Catalysis depends on Asp563, which acts as the Proton acceptor.

This sequence belongs to the protein kinase superfamily. CAMK Ser/Thr protein kinase family. NPR/HAL subfamily. HAL5 sub-subfamily.

It localises to the cytoplasm. The catalysed reaction is L-seryl-[protein] + ATP = O-phospho-L-seryl-[protein] + ADP + H(+). The enzyme catalyses L-threonyl-[protein] + ATP = O-phospho-L-threonyl-[protein] + ADP + H(+). The sequence is that of Probable serine/threonine-protein kinase KKQ8 (KKQ8) from Saccharomyces cerevisiae (strain ATCC 204508 / S288c) (Baker's yeast).